A 73-amino-acid polypeptide reads, in one-letter code: MSLELLSKLETKIQATLETIELLKMELEEEKQKSSTLSEHNQQLNEQNQQLQQELASWNEKVTGLVGLLNSEI.

Residues 3 to 69 (LELLSKLETK…EKVTGLVGLL (67 aa)) are a coiled coil. Residues 30-50 (EKQKSSTLSEHNQQLNEQNQQ) form a disordered region. Residues 41–50 (NQQLNEQNQQ) are compositionally biased toward low complexity.

The protein belongs to the ZapB family. Homodimer. The ends of the coiled-coil dimer bind to each other, forming polymers. Interacts with FtsZ.

It is found in the cytoplasm. In terms of biological role, non-essential, abundant cell division factor that is required for proper Z-ring formation. It is recruited early to the divisome by direct interaction with FtsZ, stimulating Z-ring assembly and thereby promoting cell division earlier in the cell cycle. Its recruitment to the Z-ring requires functional FtsA or ZipA. This Shewanella putrefaciens (strain CN-32 / ATCC BAA-453) protein is Cell division protein ZapB.